The sequence spans 144 residues: Urease subunit beta (144 aa).

The protein belongs to the urease beta subunit family. As to quaternary structure, heterotrimer of UreA (gamma), UreB (beta) and UreC (alpha) subunits. Three heterotrimers associate to form the active enzyme.

It localises to the cytoplasm. The enzyme catalyses urea + 2 H2O + H(+) = hydrogencarbonate + 2 NH4(+). It functions in the pathway nitrogen metabolism; urea degradation; CO(2) and NH(3) from urea (urease route): step 1/1. In Yersinia pseudotuberculosis serotype O:1b (strain IP 31758), this protein is Urease subunit beta.